We begin with the raw amino-acid sequence, 57 residues long: Andropin (57 aa).

The signal sequence occupies residues 1-23 (MKYFVVLVVLALILAITVGPSDA).

This sequence belongs to the andropin family. In terms of tissue distribution, ejaculatory duct of adult males.

The protein localises to the secreted. Functionally, male-specific peptide with moderate activity against Gram-positive bacteria. This Drosophila mauritiana (Fruit fly) protein is Andropin (Anp).